A 152-amino-acid polypeptide reads, in one-letter code: Large-conductance mechanosensitive channel (152 aa).

The next 2 helical transmembrane spans lie at 14-34 (VIDLAVGVVIGAAFGSIVKSL) and 84-104 (VGQFINSVVSFVLIAFSVFLL).

This sequence belongs to the MscL family. In terms of assembly, homopentamer.

The protein localises to the cell inner membrane. Its function is as follows. Channel that opens in response to stretch forces in the membrane lipid bilayer. May participate in the regulation of osmotic pressure changes within the cell. This is Large-conductance mechanosensitive channel from Laribacter hongkongensis (strain HLHK9).